The chain runs to 145 residues: Aspartate 1-decarboxylase (145 aa).

Catalysis depends on Ser-25, which acts as the Schiff-base intermediate with substrate; via pyruvic acid. Pyruvic acid (Ser) is present on Ser-25. Substrate is bound at residue Thr-57. Tyr-58 (proton donor) is an active-site residue. 73–75 (GAA) provides a ligand contact to substrate.

The protein belongs to the PanD family. Heterooctamer of four alpha and four beta subunits. Pyruvate is required as a cofactor. Post-translationally, is synthesized initially as an inactive proenzyme, which is activated by self-cleavage at a specific serine bond to produce a beta-subunit with a hydroxyl group at its C-terminus and an alpha-subunit with a pyruvoyl group at its N-terminus.

It is found in the cytoplasm. The enzyme catalyses L-aspartate + H(+) = beta-alanine + CO2. The protein operates within cofactor biosynthesis; (R)-pantothenate biosynthesis; beta-alanine from L-aspartate: step 1/1. In terms of biological role, catalyzes the pyruvoyl-dependent decarboxylation of aspartate to produce beta-alanine. The polypeptide is Aspartate 1-decarboxylase (Micrococcus luteus (strain ATCC 4698 / DSM 20030 / JCM 1464 / CCM 169 / CCUG 5858 / IAM 1056 / NBRC 3333 / NCIMB 9278 / NCTC 2665 / VKM Ac-2230) (Micrococcus lysodeikticus)).